The primary structure comprises 147 residues: Hemoglobin subunit epsilon (147 aa).

One can recognise a Globin domain in the interval 3–147 (HFTAEEKSTI…VATALAHKYH (145 aa)). Ser14 and Ser51 each carry phosphoserine. Heme b contacts are provided by His64 and His93.

The protein belongs to the globin family. In terms of assembly, heterotetramer of two alpha chains and two epsilon chains in early embryonic hemoglobin Gower-2; two zeta chains and two epsilon chains in early embryonic hemoglobin Gower-1. As to expression, red blood cells.

In terms of biological role, the epsilon chain is a beta-type chain of early mammalian embryonic hemoglobin. The sequence is that of Hemoglobin subunit epsilon (HBE1) from Propithecus verreauxi (White sifaka).